The sequence spans 346 residues: Dihydroorotase (346 aa).

Residues His-13 and His-15 each contribute to the Zn(2+) site. Substrate is bound by residues 15 to 17 and Asn-41; that span reads HLR. Zn(2+) contacts are provided by Lys-99, His-136, and His-174. Residue Lys-99 is modified to N6-carboxylysine. His-136 serves as a coordination point for substrate. Leu-219 provides a ligand contact to substrate. Asp-247 is a Zn(2+) binding site. The active site involves Asp-247. Substrate contacts are provided by His-251 and Ala-263.

The protein belongs to the metallo-dependent hydrolases superfamily. DHOase family. Class II DHOase subfamily. As to quaternary structure, homodimer. The cofactor is Zn(2+).

The catalysed reaction is (S)-dihydroorotate + H2O = N-carbamoyl-L-aspartate + H(+). Its pathway is pyrimidine metabolism; UMP biosynthesis via de novo pathway; (S)-dihydroorotate from bicarbonate: step 3/3. In terms of biological role, catalyzes the reversible cyclization of carbamoyl aspartate to dihydroorotate. This Rhizobium leguminosarum bv. trifolii (strain WSM2304) protein is Dihydroorotase.